The chain runs to 315 residues: tRNA dimethylallyltransferase (315 aa).

Residue 10–17 coordinates ATP; that stretch reads GPTGVGKT. 12 to 17 contacts substrate; sequence TGVGKT. Residues 35 to 38 form an interaction with substrate tRNA region; that stretch reads DSMQ.

The protein belongs to the IPP transferase family. As to quaternary structure, monomer. Requires Mg(2+) as cofactor.

The enzyme catalyses adenosine(37) in tRNA + dimethylallyl diphosphate = N(6)-dimethylallyladenosine(37) in tRNA + diphosphate. In terms of biological role, catalyzes the transfer of a dimethylallyl group onto the adenine at position 37 in tRNAs that read codons beginning with uridine, leading to the formation of N6-(dimethylallyl)adenosine (i(6)A). The protein is tRNA dimethylallyltransferase of Thermodesulfovibrio yellowstonii (strain ATCC 51303 / DSM 11347 / YP87).